A 126-amino-acid polypeptide reads, in one-letter code: C-type natriuretic peptide (126 aa).

Residues 1–23 (MHLSQLIACALLLALLSLRPSEA) form the signal peptide. The disordered stretch occupies residues 20-73 (PSEAKPGTPPKVPRTPPGEELADSQAAGGNQKKGDKTPGSGGANLKGDRSRLLR). A propeptide spanning residues 24 to 73 (KPGTPPKVPRTPPGEELADSQAAGGNQKKGDKTPGSGGANLKGDRSRLLR) is cleaved from the precursor. Positions 26-35 (GTPPKVPRTP) are enriched in pro residues. A disulfide bond links C110 and C126.

This sequence belongs to the natriuretic peptide family. Post-translationally, degraded by IDE (in vitro).

It localises to the secreted. In terms of biological role, hormone which plays a role in endochondral ossification through regulation of cartilaginous growth plate chondrocytes proliferation and differentiation. May also be vasoactive and natriuretic. Acts by specifically binding and stimulating NPR2 to produce cGMP. Binds the clearance receptor NPR3. This chain is C-type natriuretic peptide (Nppc), found in Mus musculus (Mouse).